The sequence spans 164 residues: UPF0304 protein YfbU (164 aa).

It belongs to the UPF0304 family.

The protein is UPF0304 protein YfbU of Escherichia coli O127:H6 (strain E2348/69 / EPEC).